Consider the following 301-residue polypeptide: Transcription elongation factor A protein 1 (301 aa).

M1 carries the N-acetylmethionine modification. Positions 3 to 80 (DEVVRIAKKM…KSWKKLLDGP (78 aa)) constitute a TFIIS N-terminal domain. K55 is covalently cross-linked (Glycyl lysine isopeptide (Lys-Gly) (interchain with G-Cter in ubiquitin)). Phosphoserine is present on residues S57, S81, S97, and S100. Basic and acidic residues predominate over residues 76–93 (LLDGPSTDKDPEEKKKEP). The interval 76-139 (LLDGPSTDKD…FPRAPSTSDS (64 aa)) is disordered. Residues 140–256 (VRLKCREMLA…EHQMAKTGGT (117 aa)) form the TFIIS central domain. The segment at 259-299 (DLFTCGKCKKKNCTYTQVQTRSADEPMTTFVVCNECGNRWK) adopts a TFIIS-type zinc-finger fold. Residues C263, C266, C291, and C294 each contribute to the Zn(2+) site.

The protein belongs to the TFS-II family. In terms of assembly, interacts with EAF2. Associates with UBR5 and forms a transcription regulatory complex made of CDK9, Pol II, UBR5 and TCEA1/TFIIS. Part of TBP-based Pol II pre-initiation complex (PIC), in which Pol II core assembles with general transcription factors and other specific initiation factors including GTF2E1, GTF2E2, GTF2F1, GTF2F2, TCEA1, ERCC2, ERCC3, GTF2H2, GTF2H3, GTF2H4, GTF2H5, GTF2A1, GTF2A2, GTF2B and TBP; this large multi-subunit PIC complex mediates DNA unwinding and targets Pol II core to the transcription start site where the first phosphodiester bond forms.

The protein resides in the nucleus. Functionally, necessary for efficient RNA polymerase II transcription elongation past template-encoded arresting sites. The arresting sites in DNA have the property of trapping a certain fraction of elongating RNA polymerases that pass through, resulting in locked ternary complexes. Cleavage of the nascent transcript by S-II allows the resumption of elongation from the new 3'-terminus. This chain is Transcription elongation factor A protein 1 (Tcea1), found in Mus musculus (Mouse).